The chain runs to 276 residues: Large ribosomal subunit protein uL2 (276 aa).

Positions 219–276 (TVRGSVMNPNDHPHGGGEGKQPIGRKQQMTPWGKKARGIKTRDKKKASTSMIVRRRNG) are disordered. A compositionally biased stretch (basic residues) spans 252 to 276 (KKARGIKTRDKKKASTSMIVRRRNG).

It belongs to the universal ribosomal protein uL2 family. As to quaternary structure, part of the 50S ribosomal subunit. Forms a bridge to the 30S subunit in the 70S ribosome.

One of the primary rRNA binding proteins. Required for association of the 30S and 50S subunits to form the 70S ribosome, for tRNA binding and peptide bond formation. It has been suggested to have peptidyltransferase activity; this is somewhat controversial. Makes several contacts with the 16S rRNA in the 70S ribosome. This Acholeplasma laidlawii (strain PG-8A) protein is Large ribosomal subunit protein uL2.